We begin with the raw amino-acid sequence, 135 residues long: Classical arabinogalactan protein 4 (135 aa).

The N-terminal stretch at 1–21 (MGSKIVQVFLMLALFATSALA) is a signal peptide. Residue Gln22 is modified to Pyrrolidone carboxylic acid. A disordered region spans residues 22 to 112 (QAPAPTPTAT…PSDASPAPSA (91 aa)). A 4-hydroxyproline mark is found at Pro24, Pro26, Pro28, Pro32, Pro33, Pro34, Pro37, Pro38, and Pro39. 9 O-linked (Ara...) hydroxyproline glycosylation sites follow: Pro24, Pro26, Pro28, Pro32, Pro33, Pro34, Pro37, Pro38, and Pro39. Residues 25-76 (APTPTATPPPATPPPVATPPPVATPPPAATPAPATPPPAATPAPATTPPSVA) are compositionally biased toward pro residues. Residues 96 to 112 (SPSSAPGPSDASPAPSA) show a composition bias toward low complexity. Ser111 is lipidated: GPI-anchor amidated serine. The propeptide at 112 to 135 (AAFSNKAFFAGTAFAAIMYAAVLA) is removed in mature form.

This sequence belongs to the classical AGP family. In terms of processing, O-glycosylated on hydroxyprolines; noncontiguous hydroxylproline residues are glycosylated with arabinogalactan. As to expression, highly expressed in roots, flowers and leaves.

The protein resides in the cell membrane. Its function is as follows. Proteoglycan that seems to be implicated in diverse developmental roles such as differentiation, cell-cell recognition, embryogenesis and programmed cell death. This is Classical arabinogalactan protein 4 (AGP4) from Arabidopsis thaliana (Mouse-ear cress).